Consider the following 694-residue polypeptide: MSARRSANFVNTSVTTHELVEFEVPAGIAIGQAMRELNLPNKGDDAIVCAKDTEGQLKDLSHVPEETATFTAVPANSEDGRAVIRHSCAHVLAQAVQAEFPGTKLGIGPAIENGFYYDFDVAEPFTPEDLKTIEKRMKKIIKTGQKFERRVYESTEAAAAELADEPYKLELIQDKGNVDPDSDEATEVGAGELTAYDNVNPRTNEVEWSDLCRGPHIPTTRYIPAFALTRSSAAYWRGDQTNAGLQRIYGTAWESKEKLDEYQTMLAEAEKRDHRRLGTELDLFSFPDEIGSGLPVFHPNGAIVRLEMEEHSRRRHIQAGYSFVNTPHATKSDLFEKSGHLGFYKEGMFPPLQLDAEYDAEGNQTKPGQDYYLKPMNCPMHNLIFDSRGRSYRELPLRLFEFGTVYRYEKSGVVHGLTRARGFTQDDAHIYCTEDQLEEELTSVLEFIISLLKDYGLDDFYLELSTKDPKKFVGDDEIWERSTEILQRVATNSGLDLVPDPEGAAFYGPKISVQAKDAIGRTWQMSTVQLDFNLPERFELEYTSPDGSKQRPIMIHRALFGSIERFFGVLLEHYAGAFPAWLAPHQVVGIPVAEDFIPHLEKVVDKLRARGFRAEVDTSDDRMQKKIRTHTTGKIPFMLLAGGRDVEADAVSFRFLDGTQVNGVPVDEAVELISTWILERNNTQPSEETIAALR.

The region spanning 8-74 (NFVNTSVTTH…EETATFTAVP (67 aa)) is the TGS domain. A catalytic region spans residues 273 to 579 (DHRRLGTELD…LLEHYAGAFP (307 aa)). Residues Cys-378, His-429, and His-556 each coordinate Zn(2+).

The protein belongs to the class-II aminoacyl-tRNA synthetase family. As to quaternary structure, homodimer. Zn(2+) is required as a cofactor.

The protein localises to the cytoplasm. The enzyme catalyses tRNA(Thr) + L-threonine + ATP = L-threonyl-tRNA(Thr) + AMP + diphosphate + H(+). Functionally, catalyzes the attachment of threonine to tRNA(Thr) in a two-step reaction: L-threonine is first activated by ATP to form Thr-AMP and then transferred to the acceptor end of tRNA(Thr). Also edits incorrectly charged L-seryl-tRNA(Thr). This chain is Threonine--tRNA ligase, found in Corynebacterium efficiens (strain DSM 44549 / YS-314 / AJ 12310 / JCM 11189 / NBRC 100395).